The sequence spans 895 residues: Androgen receptor (895 aa).

Residues 1–533 form a modulating region; it reads MEVQLGLGRV…PIDYYFPPQK (533 aa). Positions 1 to 562 are interaction with ZNF318; that stretch reads MEVQLGLGRV…GSCKVFFKRA (562 aa). Disordered regions lie at residues 33-155 and 175-211; these read VIQN…PTFP and QLLQ…YLGG. Composition is skewed to low complexity over residues 44 to 81 and 175 to 200; these read AASA…GSPQ and QLLQ…ASGA. Phosphoserine; by CDK9 is present on Ser-66. A Phosphoserine modification is found at Ser-79. Residues 201–211 show a composition bias toward polar residues; the sequence is PTSSKDNYLGG. At Tyr-208 the chain carries Phosphotyrosine; by CSK. Ser-241 carries the post-translational modification Phosphoserine. Position 252 is a phosphotyrosine; by CSK and TNK2 (Tyr-252). Residues Tyr-292, Tyr-331, Tyr-342, and Tyr-347 each carry the phosphotyrosine; by CSK modification. At Tyr-348 the chain carries Phosphotyrosine; by CSK and TNK2. Lys-371 is covalently cross-linked (Glycyl lysine isopeptide (Lys-Gly) (interchain with G-Cter in SUMO)). At Tyr-378 the chain carries Phosphotyrosine; by CSK. Lys-496 is covalently cross-linked (Glycyl lysine isopeptide (Lys-Gly) (interchain with G-Cter in SUMO)). Phosphotyrosine; by CSK is present on residues Tyr-510 and Tyr-527. Positions 527–894 are interaction with LPXN; it reads YYFPPQKTCL…GKVKPIYFHT (368 aa). Residues 534–607 constitute a DNA-binding region (nuclear receptor); sequence TCLICGDEAS…AGMTLGARKL (74 aa). NR C4-type zinc fingers lie at residues 535–555 and 571–595; these read CLIC…CGSC and CASR…LRKC. An interaction with HIPK3 region spans residues 547-637; sequence YGALTCGSCK…TEETAQKLTV (91 aa). An interaction with CCAR1 region spans residues 567 to 894; sequence QKYLCASRND…GKVKPIYFHT (328 aa). The interaction with KAT7 stretch occupies residues 600 to 894; it reads MTLGARKLKK…GKVKPIYFHT (295 aa). The residue at position 626 (Ser-626) is a Phosphoserine; by STK4/MST1. Positions 644–875 constitute an NR LBD domain; sequence ECQPIFLNVL…DFPEMMAEII (232 aa). 17beta-hydroxy-5alpha-androstan-3-one is bound by residues Asn-681 and Arg-728. Glycyl lysine isopeptide (Lys-Gly) (interchain with G-Cter in ubiquitin) cross-links involve residues Lys-821 and Lys-823. Thr-853 serves as a coordination point for 17beta-hydroxy-5alpha-androstan-3-one. Position 891 is a phosphotyrosine; by CSK (Tyr-891).

The protein belongs to the nuclear hormone receptor family. NR3 subfamily. Binds DNA as a homodimer. Part of a ternary complex containing AR, EFCAB6/DJBP and PARK7. Interacts with HIPK3 and NR0B2 in the presence of androgen. The ligand binding domain interacts with KAT7/HBO1 in the presence of dihydrotestosterone. Interacts with EFCAB6/DJBP, PQBP1, RANBP9, RBAK, SPDEF, SRA1, TGFB1I1 and RREB1. Interacts with ZMIZ1/ZIMP10 and ZMIZ2/ZMIP7 which both enhance its transactivation activity. Interacts with SLC30A9 and RAD54L2/ARIP4. Interacts with MACROD1 (via macro domain). Interacts via the ligand-binding domain with LXXLL and FXXLF motifs from NCOA1, NCOA2, NCOA3 and MAGEA11. Interacts (via nuclear receptor DNA binding domain and nuclear receptor ligand binding domain) with NCOA4. The AR N-terminal poly-Gln region binds Ran resulting in enhancement of AR-mediated transactivation. Ran-binding decreases as the poly-Gln length increases. Interacts with HIP1 (via coiled coil domain). Interacts (via ligand-binding domain) with TRIM68. Interacts with TNK2. Interacts with USP26. Interacts with RNF6. Interacts (regulated by RNF6 probably through polyubiquitination) with RNF14; regulates AR transcriptional activity. Interacts with PRMT2 and TRIM24. Interacts with RACK1. Interacts with RANBP10; this interaction enhances dihydrotestosterone-induced AR transcriptional activity. Interacts with PRPF6 in a hormone-independent way; this interaction enhances dihydrotestosterone-induced AR transcriptional activity. Interacts with STK4/MST1. Interacts with ZIPK/DAPK3. Interacts with LPXN. Interacts with MAK. Part of a complex containing AR, MAK and NCOA3. Interacts with CRY1. Interacts with CCAR1 and GATA2. Interacts with ZNF318. Interacts with BUD31. Interacts with ARID4A. Interacts with ARID4B. Interacts (via NR LBD domain) with ZBTB7A; the interaction is direct and androgen-dependent. Interacts with NCOR1. Interacts with NCOR2. Interacts with CRY2 in a ligand-dependent manner. In terms of processing, phosphorylated in prostate cancer cells in response to several growth factors including EGF. Phosphorylation is induced by c-Src kinase (CSK). Tyr-510 is one of the major phosphorylation sites and an increase in phosphorylation and Src kinase activity is associated with prostate cancer progression. Phosphorylation by TNK2 enhances the DNA-binding and transcriptional activity. Phosphorylation at Ser-66 by CDK9 regulates AR promoter selectivity and cell growth. Sumoylated on Lys-371 (major) and Lys-496. Ubiquitinated. Deubiquitinated by USP26. 'Lys-6' and 'Lys-27'-linked polyubiquitination by RNF6 modulates AR transcriptional activity and specificity. Post-translationally, palmitoylated by ZDHHC7 and ZDHHC21. Palmitoylation is required for plasma membrane targeting and for rapid intracellular signaling via ERK and AKT kinases and cAMP generation.

It is found in the nucleus. The protein localises to the cytoplasm. In terms of biological role, steroid hormone receptors are ligand-activated transcription factors that regulate eukaryotic gene expression and affect cellular proliferation and differentiation in target tissues. Transcription factor activity is modulated by bound coactivator and corepressor proteins like ZBTB7A that recruits NCOR1 and NCOR2 to the androgen response elements/ARE on target genes, negatively regulating androgen receptor signaling and androgen-induced cell proliferation. Transcription activation is also down-regulated by NR0B2. Activated, but not phosphorylated, by HIPK3 and ZIPK/DAPK3. This chain is Androgen receptor (AR), found in Papio hamadryas (Hamadryas baboon).